Reading from the N-terminus, the 237-residue chain is Phosphatidylserine decarboxylase proenzyme (237 aa).

Serine 206 functions as the Schiff-base intermediate with substrate; via pyruvic acid in the catalytic mechanism. Serine 206 is subject to Pyruvic acid (Ser); by autocatalysis.

It belongs to the phosphatidylserine decarboxylase family. PSD-A subfamily. Heterodimer of a large membrane-associated beta subunit and a small pyruvoyl-containing alpha subunit. Pyruvate serves as cofactor. Post-translationally, is synthesized initially as an inactive proenzyme. Formation of the active enzyme involves a self-maturation process in which the active site pyruvoyl group is generated from an internal serine residue via an autocatalytic post-translational modification. Two non-identical subunits are generated from the proenzyme in this reaction, and the pyruvate is formed at the N-terminus of the alpha chain, which is derived from the carboxyl end of the proenzyme. The post-translation cleavage follows an unusual pathway, termed non-hydrolytic serinolysis, in which the side chain hydroxyl group of the serine supplies its oxygen atom to form the C-terminus of the beta chain, while the remainder of the serine residue undergoes an oxidative deamination to produce ammonia and the pyruvoyl prosthetic group on the alpha chain.

The protein resides in the cell membrane. The enzyme catalyses a 1,2-diacyl-sn-glycero-3-phospho-L-serine + H(+) = a 1,2-diacyl-sn-glycero-3-phosphoethanolamine + CO2. The protein operates within phospholipid metabolism; phosphatidylethanolamine biosynthesis; phosphatidylethanolamine from CDP-diacylglycerol: step 2/2. Catalyzes the formation of phosphatidylethanolamine (PtdEtn) from phosphatidylserine (PtdSer). This chain is Phosphatidylserine decarboxylase proenzyme, found in Rhodococcus jostii (strain RHA1).